A 474-amino-acid polypeptide reads, in one-letter code: Glutamine synthetase (474 aa).

A GS beta-grasp domain is found at Glu14–Gly99. One can recognise a GS catalytic domain in the interval Pro106–Val474. Glu131 and Glu133 together coordinate Mg(2+). ATP is bound at residue Glu211. Mg(2+)-binding residues include Glu216 and Glu224. L-glutamate contacts are provided by residues Asn268–Gly269 and Gly269. A Mg(2+)-binding site is contributed by His273. ATP contacts are provided by residues His275 to Ser277 and Ser277. L-glutamate contacts are provided by Arg325, Glu331, and Arg343. ATP-binding residues include Arg343, Arg348, and Lys357. Residue Glu362 participates in Mg(2+) binding. Residue Arg364 coordinates L-glutamate. An O-AMP-tyrosine modification is found at Tyr402.

It belongs to the glutamine synthetase family. As to quaternary structure, oligomer of 12 subunits arranged in the form of two hexagons. Mg(2+) is required as a cofactor.

The protein localises to the cytoplasm. The catalysed reaction is L-glutamate + NH4(+) + ATP = L-glutamine + ADP + phosphate + H(+). The activity of this enzyme could be controlled by adenylation under conditions of abundant glutamine. In terms of biological role, involved in nitrogen metabolism via ammonium assimilation. Catalyzes the ATP-dependent biosynthesis of glutamine from glutamate and ammonia. The sequence is that of Glutamine synthetase from Nostoc sp. (strain PCC 7120 / SAG 25.82 / UTEX 2576).